The primary structure comprises 396 residues: ATP-dependent RNA helicase eIF4A (396 aa).

The Q motif motif lies at 23 to 51 (DSFDEMNLKSELLRGIYAYGFERPSAIQQ). Residues 54–224 (IMPVIKGHDV…TKFMRDPVRI (171 aa)) enclose the Helicase ATP-binding domain. 67–74 (AQSGTGKT) lines the ATP pocket. The DEAD box signature appears at 172–175 (DEAD). The region spanning 235–396 (GIKQFYIAVE…EMPMNVADLI (162 aa)) is the Helicase C-terminal domain.

This sequence belongs to the DEAD box helicase family. eIF4A subfamily. As to quaternary structure, component of the eIF4F complex, which composition varies with external and internal environmental conditions. It is composed of at least eIF4A, eIF4E and eIF4G.

The protein resides in the cytoplasm. The catalysed reaction is ATP + H2O = ADP + phosphate + H(+). ATP-dependent RNA helicase which is a subunit of the eIF4F complex involved in cap recognition and is required for mRNA binding to ribosome. In the current model of translation initiation, eIF4A unwinds RNA secondary structures in the 5'-UTR of mRNAs which is necessary to allow efficient binding of the small ribosomal subunit, and subsequent scanning for the initiator codon. This Pyricularia oryzae (strain 70-15 / ATCC MYA-4617 / FGSC 8958) (Rice blast fungus) protein is ATP-dependent RNA helicase eIF4A (TIF1).